The chain runs to 237 residues: Ribonuclease PH (237 aa).

Phosphate-binding positions include R86 and 124 to 126 (GTR).

The protein belongs to the RNase PH family. In terms of assembly, homohexameric ring arranged as a trimer of dimers.

It catalyses the reaction tRNA(n+1) + phosphate = tRNA(n) + a ribonucleoside 5'-diphosphate. Functionally, phosphorolytic 3'-5' exoribonuclease that plays an important role in tRNA 3'-end maturation. Removes nucleotide residues following the 3'-CCA terminus of tRNAs; can also add nucleotides to the ends of RNA molecules by using nucleoside diphosphates as substrates, but this may not be physiologically important. Probably plays a role in initiation of 16S rRNA degradation (leading to ribosome degradation) during starvation. The chain is Ribonuclease PH from Idiomarina loihiensis (strain ATCC BAA-735 / DSM 15497 / L2-TR).